The sequence spans 342 residues: 4-hydroxy-2-oxovalerate aldolase (342 aa).

In terms of domain architecture, Pyruvate carboxyltransferase spans 8 to 260; that stretch reads ITVHDMTLRD…ATGVDLFKMQ (253 aa). Position 16–17 (16–17) interacts with substrate; sequence RD. A Mn(2+)-binding site is contributed by D17. H20 acts as the Proton acceptor in catalysis. Substrate-binding residues include S170 and H199. Positions 199 and 201 each coordinate Mn(2+). Y290 lines the substrate pocket.

It belongs to the 4-hydroxy-2-oxovalerate aldolase family.

It catalyses the reaction (S)-4-hydroxy-2-oxopentanoate = acetaldehyde + pyruvate. This is 4-hydroxy-2-oxovalerate aldolase from Albidiferax ferrireducens (strain ATCC BAA-621 / DSM 15236 / T118) (Rhodoferax ferrireducens).